Reading from the N-terminus, the 350-residue chain is Farnesyl pyrophosphate synthase (350 aa).

Isopentenyl diphosphate contacts are provided by K55, R58, and Q94. 2 residues coordinate Mg(2+): D101 and D105. Residue R110 participates in dimethylallyl diphosphate binding. Position 111 (R111) interacts with isopentenyl diphosphate. The dimethylallyl diphosphate site is built by K198, T199, Q237, K254, and K263.

This sequence belongs to the FPP/GGPP synthase family. It depends on Mg(2+) as a cofactor.

The protein resides in the cytoplasm. The enzyme catalyses isopentenyl diphosphate + dimethylallyl diphosphate = (2E)-geranyl diphosphate + diphosphate. The catalysed reaction is isopentenyl diphosphate + (2E)-geranyl diphosphate = (2E,6E)-farnesyl diphosphate + diphosphate. It functions in the pathway isoprenoid biosynthesis; farnesyl diphosphate biosynthesis; farnesyl diphosphate from geranyl diphosphate and isopentenyl diphosphate: step 1/1. The protein operates within isoprenoid biosynthesis; geranyl diphosphate biosynthesis; geranyl diphosphate from dimethylallyl diphosphate and isopentenyl diphosphate: step 1/1. Functionally, catalyzes the sequential condensation of isopentenyl pyrophosphate with the allylic pyrophosphates, dimethylallyl pyrophosphate, and then with the resultant geranylpyrophosphate to the ultimate product farnesyl pyrophosphate. This chain is Farnesyl pyrophosphate synthase (FPS), found in Zea mays (Maize).